Here is a 215-residue protein sequence, read N- to C-terminus: MVKSRNTTTAHVHDVPRIMGGIKKLKLTKETAMAAGRKLKTLLAKVDAVEKVCVICMEPTYTKKTLAECDIEGGALRVTTMPCPTHYICDNCIRQEMEDKCPICRKDWPERRIIYGNEAKLYKYWLIDNDDIMILENNNDIDELTPEEEDHLLSDDESDNYVPRYTLDSLVEEVLSERSQMSNDRLMNDMIDNIAVNNAIDDDCIIIDDYIDLTI.

The RING-type; degenerate zinc-finger motif lies at 53–105 (CVICMEPTYTKKTLAECDIEGGALRVTTMPCPTHYICDNCIRQEMEDKCPICR).

This is Putative zinc finger protein ORF121 from Magallana gigas (Pacific oyster).